The primary structure comprises 113 residues: Nascent polypeptide-associated complex protein (113 aa).

Residues 5–73 (GMNPAKMKQM…AKEVPKSLEI (69 aa)) form the NAC-A/B domain.

It belongs to the NAC-alpha family. Homodimer. Interacts with the ribosome. Binds ribosomal RNA.

Functionally, contacts the emerging nascent chain on the ribosome. The protein is Nascent polypeptide-associated complex protein of Methanosarcina acetivorans (strain ATCC 35395 / DSM 2834 / JCM 12185 / C2A).